The sequence spans 519 residues: Glutamate--cysteine ligase (519 aa).

It belongs to the glutamate--cysteine ligase type 1 family. Type 1 subfamily.

It catalyses the reaction L-cysteine + L-glutamate + ATP = gamma-L-glutamyl-L-cysteine + ADP + phosphate + H(+). It participates in sulfur metabolism; glutathione biosynthesis; glutathione from L-cysteine and L-glutamate: step 1/2. This chain is Glutamate--cysteine ligase, found in Photorhabdus laumondii subsp. laumondii (strain DSM 15139 / CIP 105565 / TT01) (Photorhabdus luminescens subsp. laumondii).